The chain runs to 140 residues: Midkine (140 aa).

The N-terminal stretch at 1 to 22 (MQHRGFFLLALLALLVVTSAVA) is a signal peptide. 5 disulfides stabilise this stretch: Cys-34–Cys-58, Cys-42–Cys-67, Cys-49–Cys-71, Cys-81–Cys-113, and Cys-91–Cys-123.

It belongs to the pleiotrophin family. Homodimer. Interacts with ALK. Interacts with LRP1; promotes neuronal survival. Interacts with LRP2. Interacts with NCAM1. Interacts (via C-terminal) with PTPRZ1 (via chondroitin sulfate chains); this interaction is inhibited by PTN; this interaction promotes neuronal migration. Interacts with NCL; this interaction promotes NCL clustering and lateral movements of this complex into lipid rafts leading to MDK internalization. Interacts with LRP6 and LRP8: this interaction is calcium dependent. Interacts with ITGA4. Interacts with ITGA6. Interacts with ITGB1. Interacts with ITGA4:ITGB1 complex; this interaction mediates MDK-induced osteoblast cells migration through PXN phosphorylation. Interacts with ITGA6:ITGB1 complex; this interaction mediates MDK-induced neurite outgrowth. Interacts with NOTCH2; this interactio mediates a nuclear accumulation of NOTCH2 and therefore activation of NOTCH2 signaling leading to interaction between HES1 and STAT3. Interacts with GPC2 (via heparan sulfate chain); this interaction is inhibited by heparin followed by chondroitin sulfate E; this interaction induces GPC2 clustering through heparan sulfate chain; this interaction induces neuronal cell adhesion and neurite outgrowth. Interacts with SDC3; this interaction induces SDC3 clustering; this interaction induces neuronal cell adhesion and neurite outgrowth. Interacts with SDC1. Interacts with CSPG5; this interaction promotes elongation of oligodendroglial precursor-like cells. As to expression, expressed in the follicular epithelium and granulosa cells of the ovary.

It is found in the secreted. Secreted protein that functions as a cytokine and growth factor and mediates its signal through cell-surface proteoglycan and non-proteoglycan receptors. Binds cell-surface proteoglycan receptors via their chondroitin sulfate (CS) groups. Thereby regulates many processes like inflammatory response, cell proliferation, cell adhesion, cell growth, cell survival, tissue regeneration, cell differentiation and cell migration. Participates in inflammatory processes by exerting two different activities. Firstly, mediates neutrophils and macrophages recruitment to the sites of inflammation both by direct action by cooperating namely with ITGB2 via LRP1 and by inducing chemokine expression. This inflammation can be accompanied by epithelial cell survival and smooth muscle cell migration after renal and vessel damage, respectively. Secondly, suppresses the development of tolerogenic dendric cells thereby inhibiting the differentiation of regulatory T cells and also promote T cell expansion through NFAT signaling and Th1 cell differentiation. Promotes tissue regeneration after injury or trauma. After heart damage negatively regulates the recruitment of inflammatory cells and mediates cell survival through activation of anti-apoptotic signaling pathways via MAPKs and AKT pathways through the activation of angiogenesis. Also facilitates liver regeneration as well as bone repair by recruiting macrophage at trauma site and by promoting cartilage development by facilitating chondrocyte differentiation. Plays a role in brain by promoting neural precursor cells survival and growth through interaction with heparan sulfate proteoglycans. Binds PTPRZ1 and promotes neuronal migration and embryonic neurons survival. Binds SDC3 or GPC2 and mediates neurite outgrowth and cell adhesion. Binds chondroitin sulfate E and heparin leading to inhibition of neuronal cell adhesion induced by binding with GPC2. Binds CSPG5 and promotes elongation of oligodendroglial precursor-like cells. Also binds ITGA6:ITGB1 complex; this interaction mediates MDK-induced neurite outgrowth. Binds LRP1; promotes neuronal survival. Binds ITGA4:ITGB1 complex; this interaction mediates MDK-induced osteoblast cells migration through PXN phosphorylation. Binds anaplastic lymphoma kinase (ALK) which induces ALK activation and subsequent phosphorylation of the insulin receptor substrate (IRS1), followed by the activation of mitogen-activated protein kinase (MAPK) and PI3-kinase, and the induction of cell proliferation. Promotes epithelial to mesenchymal transition through interaction with NOTCH2. During arteriogenesis, plays a role in vascular endothelial cell proliferation by inducing VEGFA expression and release which in turn induces nitric oxide synthase expression. Moreover activates vasodilation through nitric oxide synthase activation. Negatively regulates bone formation in response to mechanical load by inhibiting Wnt/beta-catenin signaling in osteoblasts. In addition plays a role in hippocampal development, working memory, auditory response, early fetal adrenal gland development and the female reproductive system. The sequence is that of Midkine from Mus musculus (Mouse).